The primary structure comprises 444 residues: Ribulose bisphosphate carboxylase (444 aa).

Lys163 serves as the catalytic Proton acceptor. Residue Lys165 coordinates substrate. Mg(2+) contacts are provided by Lys189, Asp191, and Glu192. Lys189 is subject to N6-carboxylysine. The active-site Proton acceptor is the His281. Substrate-binding positions include Arg282, His314, Ser367–Gly369, and Gln389–Gly392.

This sequence belongs to the RuBisCO large chain family. Type III subfamily. In terms of assembly, homodecamer, consisting of five dimer units which form a ring-like pentagonal structure. This arrangement is essential for its high thermostability. In contrast to form I RuBisCO, the form III RuBisCO is composed solely of large subunits. The cofactor is Mg(2+).

The catalysed reaction is 2 (2R)-3-phosphoglycerate + 2 H(+) = D-ribulose 1,5-bisphosphate + CO2 + H2O. The enzyme catalyses D-ribulose 1,5-bisphosphate + O2 = 2-phosphoglycolate + (2R)-3-phosphoglycerate + 2 H(+). Catalyzes the addition of molecular CO(2) and H(2)O to ribulose 1,5-bisphosphate (RuBP), generating two molecules of 3-phosphoglycerate (3-PGA). Functions in an archaeal AMP degradation pathway, together with AMP phosphorylase and R15P isomerase. This Thermococcus kodakarensis (strain ATCC BAA-918 / JCM 12380 / KOD1) (Pyrococcus kodakaraensis (strain KOD1)) protein is Ribulose bisphosphate carboxylase.